Reading from the N-terminus, the 347-residue chain is MSEPVVLGIESTCDETAAAIVRGRELLSNVVASSMEEHARYGGVIPEIASRAHAEAFVPCVSKALVDANMTLADVDAIAVSAGPGLAGCLAVGVSGAKALAWAANKPIYGINHVIGHIAVTQLQFGPFPKDTLALIVSGGHTSLLHVEDMPRKIDVVGTTLDDAAGECFDKVARLLGFPYPGGPHIDRHGQNGDPHAIKVPMGLTQGKAGAAHPYDFSFSGVKTAVARWVESEQAAGHEIPVDDVCASLADSVATVLARKAMRGCRQYDSNTLIVGGGFSANSQLRAKLLEFGENYGVDVRIPQIKLCTDNGAMVAMLGVNLVEAGVAPSAPDFPIDSAMPLTKVSM.

Fe cation contacts are provided by His-113 and His-117. Substrate is bound by residues 136 to 140 (IVSGG), Asp-170, Gly-183, Asp-187, and Asn-282. Asp-310 serves as a coordination point for Fe cation.

Belongs to the KAE1 / TsaD family. Requires Fe(2+) as cofactor.

The protein localises to the cytoplasm. It carries out the reaction L-threonylcarbamoyladenylate + adenosine(37) in tRNA = N(6)-L-threonylcarbamoyladenosine(37) in tRNA + AMP + H(+). Functionally, required for the formation of a threonylcarbamoyl group on adenosine at position 37 (t(6)A37) in tRNAs that read codons beginning with adenine. Is involved in the transfer of the threonylcarbamoyl moiety of threonylcarbamoyl-AMP (TC-AMP) to the N6 group of A37, together with TsaE and TsaB. TsaD likely plays a direct catalytic role in this reaction. The polypeptide is tRNA N6-adenosine threonylcarbamoyltransferase (Bifidobacterium longum (strain NCC 2705)).